The following is a 258-amino-acid chain: MTPPSNGQAAETNDHLVQSDNPEHPANLIPSLCAKFWTLGWVTGTGGGASIREDDLVYIAPSGVQKELMKASDIYVLSLAAQAQSLDRRNRVYLRSPPSYKPSQCTPLFLAAFTKRRAGCCIHTHSHWAVLVTLILETQGAGKDREFRINNIEQIKGFGKGFEKSGNLGYHDTLVIPVIENTAHEEDLTEFLEEAMDKYPDTYAVLVRRHGVYVWGDNVHKAKTQCESLDYLFQLAVEMKQLNLPWITDIEPVTPRKS.

The span at 1–20 (MTPPSNGQAAETNDHLVQSD) shows a compositional bias: polar residues. Positions 1–21 (MTPPSNGQAAETNDHLVQSDN) are disordered. C105 serves as a coordination point for substrate. Zn(2+) is bound by residues H123 and H125. Catalysis depends on E153, which acts as the Proton donor/acceptor. Position 210 (H210) interacts with Zn(2+).

The protein belongs to the aldolase class II family. MtnB subfamily. It depends on Zn(2+) as a cofactor.

The protein resides in the cytoplasm. The catalysed reaction is 5-(methylsulfanyl)-D-ribulose 1-phosphate = 5-methylsulfanyl-2,3-dioxopentyl phosphate + H2O. It functions in the pathway amino-acid biosynthesis; L-methionine biosynthesis via salvage pathway; L-methionine from S-methyl-5-thio-alpha-D-ribose 1-phosphate: step 2/6. In terms of biological role, catalyzes the dehydration of methylthioribulose-1-phosphate (MTRu-1-P) into 2,3-diketo-5-methylthiopentyl-1-phosphate (DK-MTP-1-P). The protein is Methylthioribulose-1-phosphate dehydratase of Chaetomium globosum (strain ATCC 6205 / CBS 148.51 / DSM 1962 / NBRC 6347 / NRRL 1970) (Soil fungus).